The chain runs to 105 residues: Thioredoxin (105 aa).

Residues 2 to 105 (VKLIESKEAF…KLEATITEFA (104 aa)) enclose the Thioredoxin domain. K3 is modified (N6-acetyllysine). K8 is modified (N6-succinyllysine). Residues C32 and C35 each act as nucleophile in the active site. C32 and C35 are disulfide-bonded. An N6-acetyllysine modification is found at K39. 2 positions are modified to S-nitrosocysteine: C62 and C69. Position 73 is an S-nitrosocysteine; alternate (C73). Residue K94 is modified to N6-acetyllysine; alternate. Residue K94 is modified to N6-succinyllysine; alternate.

This sequence belongs to the thioredoxin family. Homodimer; disulfide-linked. Interacts with TXNIP through the redox-active site. Interacts with MAP3K5 and CASP3. Interacts with APEX1; the interaction stimulates the FOS/JUN AP-1 DNA-binding activity in a redox-dependent manner. In terms of processing, in the fully reduced protein, both Cys-69 and Cys-73 are nitrosylated in response to nitric oxide (NO). When two disulfide bonds are present in the protein, only Cys-73 is nitrosylated. Cys-73 can serve as donor for nitrosylation of target proteins.

It is found in the nucleus. It localises to the cytoplasm. Its subcellular location is the secreted. Its function is as follows. Participates in various redox reactions through the reversible oxidation of its active center dithiol to a disulfide and catalyzes dithiol-disulfide exchange reactions. Plays a role in the reversible S-nitrosylation of cysteine residues in target proteins, and thereby contributes to the response to intracellular nitric oxide. Nitrosylates the active site Cys of CASP3 in response to nitric oxide (NO), and thereby inhibits caspase-3 activity. Induces the FOS/JUN AP-1 DNA binding activity in ionizing radiation (IR) cells through its oxidation/reduction status and stimulates AP-1 transcriptional activity. The polypeptide is Thioredoxin (Txn) (Rattus norvegicus (Rat)).